The primary structure comprises 881 residues: Beta-mannosidase (881 aa).

The N-terminal stretch at 1–18 (MHLHLLFLLALCGAGCMA) is a signal peptide. N-linked (GlcNAc...) asparagine glycans are attached at residues Asn-35, Asn-77, Asn-89, and Asn-113. Cys-167 and Cys-176 are oxidised to a cystine. 190–192 (WDW) is a substrate binding site. N-linked (GlcNAc...) asparagine glycosylation is found at Asn-226, Asn-297, and Asn-302. A substrate-binding site is contributed by Asn-456. The active-site Proton donor is Glu-457. 3 disulfides stabilise this stretch: Cys-540–Cys-629, Cys-732–Cys-761, and Cys-764–Cys-769. Glu-554 acts as the Nucleophile in catalysis. N-linked (GlcNAc...) asparagine glycosylation is present at Asn-803.

The protein belongs to the glycosyl hydrolase 2 family. In terms of assembly, monomer.

The protein resides in the lysosome. The catalysed reaction is Hydrolysis of terminal, non-reducing beta-D-mannose residues in beta-D-mannosides.. It functions in the pathway glycan metabolism; N-glycan degradation. Its function is as follows. Exoglycosidase that cleaves the single beta-linked mannose residue from the non-reducing end of all N-linked glycoprotein oligosaccharides. The sequence is that of Beta-mannosidase from Rattus norvegicus (Rat).